The following is a 138-amino-acid chain: Basic phospholipase A2 DAV-N6 (138 aa).

Residues 1–16 form the signal peptide; sequence MRTLWIVAVLLVSVEG. Intrachain disulfides connect cysteine 42–cysteine 131, cysteine 44–cysteine 60, cysteine 59–cysteine 111, cysteine 65–cysteine 138, cysteine 66–cysteine 104, cysteine 73–cysteine 97, and cysteine 91–cysteine 102. The Ca(2+) site is built by tyrosine 43, glycine 45, and glycine 47. Residue histidine 63 is part of the active site. Position 64 (aspartate 64) interacts with Ca(2+). Aspartate 105 is an active-site residue.

Requires Ca(2+) as cofactor. In terms of tissue distribution, expressed by the venom gland.

It localises to the secreted. It carries out the reaction a 1,2-diacyl-sn-glycero-3-phosphocholine + H2O = a 1-acyl-sn-glycero-3-phosphocholine + a fatty acid + H(+). Snake venom phospholipase A2 (PLA2) that inhibits neuromuscular transmission by blocking acetylcholine release from the nerve termini. PLA2 catalyzes the calcium-dependent hydrolysis of the 2-acyl groups in 3-sn-phosphoglycerides. The chain is Basic phospholipase A2 DAV-N6 from Deinagkistrodon acutus (Hundred-pace snake).